We begin with the raw amino-acid sequence, 202 residues long: Small ribosomal subunit protein bS20c (202 aa).

A chloroplast-targeting transit peptide spans 1–79 (MATIVQCLSS…KPMRQLIVCE (79 aa)). A disordered region spans residues 89-110 (SAAKRARQAEKRRVYNKSKKSE).

Belongs to the bacterial ribosomal protein bS20 family. As to quaternary structure, part of the 30S ribosomal subunit.

It is found in the plastid. The protein localises to the chloroplast. Its function is as follows. Binds directly to 16S ribosomal RNA. This Arabidopsis thaliana (Mouse-ear cress) protein is Small ribosomal subunit protein bS20c (RPS20).